A 100-amino-acid polypeptide reads, in one-letter code: uncharacterized protein (100 aa).

A signal peptide spans 1–26 (MKRLLVSLRVWMVFLMNWVTPDRKTA).

This is an uncharacterized protein from Bacillus subtilis (strain 168).